Here is a 440-residue protein sequence, read N- to C-terminus: Tyrosine--tRNA ligase (440 aa).

L-tyrosine is bound at residue Y46. The 'HIGH' region signature appears at 51 to 60 (PTAASLHIGN). 2 residues coordinate L-tyrosine: Y181 and Q185. The 'KMSKS' region signature appears at 241 to 245 (KFGKS). K244 contributes to the ATP binding site. The 67-residue stretch at 373-439 (DRVIDAAQAA…GKKALGAVEN (67 aa)) folds into the S4 RNA-binding domain.

This sequence belongs to the class-I aminoacyl-tRNA synthetase family. TyrS type 1 subfamily. Homodimer.

The protein resides in the cytoplasm. The catalysed reaction is tRNA(Tyr) + L-tyrosine + ATP = L-tyrosyl-tRNA(Tyr) + AMP + diphosphate + H(+). Catalyzes the attachment of tyrosine to tRNA(Tyr) in a two-step reaction: tyrosine is first activated by ATP to form Tyr-AMP and then transferred to the acceptor end of tRNA(Tyr). This is Tyrosine--tRNA ligase from Bifidobacterium longum (strain NCC 2705).